The following is a 166-amino-acid chain: Endoribonuclease YbeY (166 aa).

3 residues coordinate Zn(2+): H132, H136, and H142.

This sequence belongs to the endoribonuclease YbeY family. Zn(2+) is required as a cofactor.

It is found in the cytoplasm. Single strand-specific metallo-endoribonuclease involved in late-stage 70S ribosome quality control and in maturation of the 3' terminus of the 16S rRNA. The chain is Endoribonuclease YbeY from Clostridium botulinum (strain ATCC 19397 / Type A).